A 33-amino-acid chain; its full sequence is Protamine TP14 (33 aa).

A disordered region spans residues 1 to 33; sequence MPRRRRSSRPPVRRRRRPRVSRRRRRRGGRRRR.

As to expression, testis.

It localises to the nucleus. Its subcellular location is the chromosome. Protamines substitute for histones in the chromatin of sperm during the haploid phase of spermatogenesis. They compact sperm DNA into a highly condensed, stable and inactive complex. The chain is Protamine TP14 from Oncorhynchus mykiss (Rainbow trout).